The primary structure comprises 341 residues: NADH-quinone oxidoreductase subunit H 2 (341 aa).

The next 8 helical transmembrane spans lie at 13–33 (IIVIGQSVLLLVLLLISIAYI), 82–102 (GVFLLAPLVTCVLALAAWAVI), 115–135 (VGVLYILAVSSLSVYGIIMAG), 161–181 (IGFVVICVLLCVGSLNLTAIV), 190–210 (MLGWYWLPLFPMFVVFYVSAL), 248–268 (YVAIVTMCAMGTILFLGGWLP), 277–297 (WVPGIVWFALKVLFMFFLFAM), and 317–337 (VFLPLSLAMVVIVAAVLQFAG).

It belongs to the complex I subunit 1 family. As to quaternary structure, NDH-1 is composed of 14 different subunits. Subunits NuoA, H, J, K, L, M, N constitute the membrane sector of the complex.

Its subcellular location is the cell inner membrane. It catalyses the reaction a quinone + NADH + 5 H(+)(in) = a quinol + NAD(+) + 4 H(+)(out). Its function is as follows. NDH-1 shuttles electrons from NADH, via FMN and iron-sulfur (Fe-S) centers, to quinones in the respiratory chain. The immediate electron acceptor for the enzyme in this species is believed to be ubiquinone. Couples the redox reaction to proton translocation (for every two electrons transferred, four hydrogen ions are translocated across the cytoplasmic membrane), and thus conserves the redox energy in a proton gradient. This subunit may bind ubiquinone. The polypeptide is NADH-quinone oxidoreductase subunit H 2 (Rhodopseudomonas palustris (strain BisB5)).